A 1128-amino-acid polypeptide reads, in one-letter code: MTSLNGRHAEKTIDMPKPSAPKVHVQRSVSRDTIAIHFSASGEEEEEEEEEFRGYLEEGLDDQSIVTGLEAKEDLYLESQGGHDPAGPVSTAPADGLSVSESPAILPVSENTVKLLESPAPALQVLSPVPLALSPGSSSSGPLASSPSVSSLSEQKTSSSSPLSSPSKSPVLSSSASSSALSSAKPFMSLVKSLSTEVEPKESPHPPRHRHLMKTLVKSLSTDTSRQESDTVSYKPPDSKLNLHLFKQFTQPRNTGGDSKTAPSSPLTSPSDTRSFFKVPEMEAKIEDTKRRLSEVIYEPFQLLSKIIGEESGSHRPKALSASASELSSLSGLNGHLESNNYSIKEEEGDSEGEGYGSDSNTSRSDHLKPTEDASKEVEPKGSQASSLKDLGLKTSSLVLEKCSLSALVSKEDEEFCELYTEDFELETEGEGRLDKTLDLPLKPEVLASDGVALESEDEEDSATEHQELPVKTLGFFIMCVYAYLILPLPYYMSGLFLGVGLGFMTAVCMIWFFTPPSAHKHHKSLKALRHQSTRSLDIKEPEILKGWMNEIYNYDPETYHATLTHSVFVRLEGGTLRLSKPNKNISRRASYNETKPEVTYISQKIYDLSDSKIYLVPKSLARKRIWNKKYPICIELGRQDDFMSKAQSDKEATEEKPPPEKELPSEDLKKPPQPQEGTKSSQRDPILYLFGRTGREKEEWFRRFILASRLKSELRKPAGVSGSKSGLLPAHSRHSSPSGHLSHSRSSSKGSVEEMMSQPKQKELVGSVRQKMLLDYSVYMGRCVPQDNRSPHRSPVQSAESSPTASKKLPEAPPSEEEEQEAWVNALLGRIFWDFLGEKYWSDVVSKKIQMKLSKIKLPYFMNELTLTELDMGVAVPKILQAFKPYVDHQGLWIDLEMSYNGSFLMTLETKMNLTKLGKEPLVEALKVGEIGKEGCRPRAYCLADSDEESSSAGSSEEDDPPEPTAGDKQPLPGAEGYVGGHRTSKIMRFVDKITKSKYFQKATETEFIKKKIEEVSNTPLLLTVEVQECRGTLAVNIPPPPTDRIWYGFRKPPYVELKARPKLGEREVTLVHVTEWIEKKLEQELQKVFVMPNMDDVYIPIMHSAMDPRSTSCLLKEPPVETSDQL.

Disordered stretches follow at residues 1–28, 71–99, and 130–279; these read MTSL…VQRS, AKED…GLSV, and PLAL…FFKV. The span at 130–186 shows a compositional bias: low complexity; that stretch reads PLALSPGSSSSGPLASSPSVSSLSEQKTSSSSPLSSPSKSPVLSSSASSSALSSAKP. Residue S195 is modified to Phosphoserine. Polar residues predominate over residues 248 to 274; the sequence is QFTQPRNTGGDSKTAPSSPLTSPSDTR. T261 is modified (phosphothreonine). Residues S264, S265, S269, and S294 each carry the phosphoserine modification. The tract at residues 345–387 is disordered; sequence KEEEGDSEGEGYGSDSNTSRSDHLKPTEDASKEVEPKGSQASS. The segment covering 364–380 has biased composition (basic and acidic residues); the sequence is RSDHLKPTEDASKEVEP. A run of 2 helical transmembrane segments spans residues 473 to 493 and 495 to 515; these read TLGF…PYYM and GLFL…WFFT. An N-linked (GlcNAc...) asparagine glycan is attached at N593. Over residues 645 to 671 the composition is skewed to basic and acidic residues; it reads SKAQSDKEATEEKPPPEKELPSEDLKK. Disordered regions lie at residues 645–688, 716–765, 787–821, and 945–981; these read SKAQ…DPIL, RKPA…QKEL, QDNR…EEEQ, and ADSD…GYVG. Phosphoserine is present on residues S733, S739, S745, S749, S752, S799, and S816. Residues 736-751 show a composition bias toward low complexity; it reads SSPSGHLSHSRSSSKG. The span at 796–806 shows a compositional bias: polar residues; the sequence is PVQSAESSPTA. Positions 817–1102 constitute an SMP-LTD domain; the sequence is EEEEQEAWVN…MPNMDDVYIP (286 aa). The segment covering 946–963 has biased composition (acidic residues); the sequence is DSDEESSSAGSSEEDDPP.

It localises to the endoplasmic reticulum membrane. Its subcellular location is the nucleus membrane. Its function is as follows. During endoplasmic reticulum (ER) stress or when cellular ceramide levels increase, may induce contacts between the ER and medial-Golgi complex to facilitate non-vesicular transport of ceramides from the ER to the Golgi complex where they are converted to complex sphingolipids, preventing toxic ceramide accumulation. This Mus musculus (Mouse) protein is Testis-expressed protein 2 (Tex2).